Consider the following 120-residue polypeptide: Large ribosomal subunit protein bL12 (120 aa).

Belongs to the bacterial ribosomal protein bL12 family. As to quaternary structure, homodimer. Part of the ribosomal stalk of the 50S ribosomal subunit. Forms a multimeric L10(L12)X complex, where L10 forms an elongated spine to which 2 to 4 L12 dimers bind in a sequential fashion. Binds GTP-bound translation factors.

Functionally, forms part of the ribosomal stalk which helps the ribosome interact with GTP-bound translation factors. Is thus essential for accurate translation. The protein is Large ribosomal subunit protein bL12 of Lactobacillus acidophilus (strain ATCC 700396 / NCK56 / N2 / NCFM).